The primary structure comprises 135 residues: FK506-binding protein 2 (135 aa).

An N-terminal signal peptide occupies residues 1 to 17 (MLLKSLFLLFLTAIAFA). The region spanning 40 to 127 (GDLISVHYEG…VFVAELVDIA (88 aa)) is the PPIase FKBP-type domain. The short motif at 132 to 135 (HDEL) is the Prevents secretion from ER element.

Belongs to the FKBP-type PPIase family. FKBP2 subfamily.

It is found in the endoplasmic reticulum. The catalysed reaction is [protein]-peptidylproline (omega=180) = [protein]-peptidylproline (omega=0). With respect to regulation, inhibited by both FK506 and rapamycin. In terms of biological role, PPIases accelerate the folding of proteins. It catalyzes the cis-trans isomerization of proline imidic peptide bonds in oligopeptides. In Debaryomyces hansenii (strain ATCC 36239 / CBS 767 / BCRC 21394 / JCM 1990 / NBRC 0083 / IGC 2968) (Yeast), this protein is FK506-binding protein 2 (FPR2).